The primary structure comprises 874 residues: Alanine--tRNA ligase (874 aa).

Zn(2+) contacts are provided by His-564, His-568, Cys-665, and His-669.

This sequence belongs to the class-II aminoacyl-tRNA synthetase family. It depends on Zn(2+) as a cofactor.

It localises to the cytoplasm. It carries out the reaction tRNA(Ala) + L-alanine + ATP = L-alanyl-tRNA(Ala) + AMP + diphosphate. In terms of biological role, catalyzes the attachment of alanine to tRNA(Ala) in a two-step reaction: alanine is first activated by ATP to form Ala-AMP and then transferred to the acceptor end of tRNA(Ala). Also edits incorrectly charged Ser-tRNA(Ala) and Gly-tRNA(Ala) via its editing domain. This Polaromonas naphthalenivorans (strain CJ2) protein is Alanine--tRNA ligase.